An 862-amino-acid chain; its full sequence is DNA replication licensing factor MCM4 (862 aa).

Low complexity predominate over residues 1-10 (MSSPASTPSR). Disordered stretches follow at residues 1 to 71 (MSSP…FSSP) and 90 to 121 (TYGTPSSRVEGTPRSGVRGTPVRQRPDLGSAR). At S2 the chain carries N-acetylserine. S6 is subject to Phosphoserine. Residues T7 and T19 each carry the phosphothreonine modification. 3 positions are modified to phosphoserine: S26, S31, and S32. Residues 61–71 (PPAQNALFSSP) show a composition bias toward polar residues. T101 is subject to Phosphothreonine. Position 104 is a phosphoserine (S104). T109 is modified (phosphothreonine). 4 positions are modified to phosphoserine: S119, S130, S141, and S144. At K219 the chain carries N6-acetyllysine. K438 is covalently cross-linked (Glycyl lysine isopeptide (Lys-Gly) (interchain with G-Cter in SUMO2)). Residue K449 is modified to N6-acetyllysine. Positions 457–666 (IYERLASALA…YDRRLAHHLV (210 aa)) constitute an MCM domain. Residues Y470, R496, K515, S516, N617, R642, R731, and E734 each contribute to the ATP site. The Arginine finger signature appears at 641–644 (SRFD). K797 participates in a covalent cross-link: Glycyl lysine isopeptide (Lys-Gly) (interchain with G-Cter in SUMO2). The residue at position 857 (K857) is an N6-acetyllysine.

Belongs to the MCM family. In terms of assembly, component of the MCM2-7 complex. The complex forms a toroidal hexameric ring with the proposed subunit order MCM2-MCM6-MCM4-MCM7-MCM3-MCM5. Component of the CMG helicase complex, a hexameric ring of related MCM2-7 subunits stabilized by CDC45 and the tetrameric GINS complex. Interacts with MCMBP. In terms of processing, sumoylated; SUMO2 modified in response to stress caused by inhibition of proteasome activity (in vitro).

It is found in the nucleus. It localises to the chromosome. The catalysed reaction is ATP + H2O = ADP + phosphate + H(+). Acts as a component of the MCM2-7 complex (MCM complex) which is the replicative helicase essential for 'once per cell cycle' DNA replication initiation and elongation in eukaryotic cells. Core component of CDC45-MCM-GINS (CMG) helicase, the molecular machine that unwinds template DNA during replication, and around which the replisome is built. The active ATPase sites in the MCM2-7 ring are formed through the interaction surfaces of two neighboring subunits such that a critical structure of a conserved arginine finger motif is provided in trans relative to the ATP-binding site of the Walker A box of the adjacent subunit. The six ATPase active sites, however, are likely to contribute differentially to the complex helicase activity. The sequence is that of DNA replication licensing factor MCM4 (Mcm4) from Mus musculus (Mouse).